A 321-amino-acid chain; its full sequence is ATP-dependent 6-phosphofructokinase (321 aa).

Gly-12 lines the ATP pocket. ADP contacts are provided by residues 22-26 and 55-60; these read RAVVR and RYSVSD. ATP-binding positions include 73–74 and 103–106; these read RF and GDGS. Asp-104 contacts Mg(2+). Substrate is bound at residue 127 to 129; it reads TID. Asp-129 functions as the Proton acceptor in the catalytic mechanism. Arg-156 is a binding site for ADP. Substrate-binding positions include Arg-164 and 171 to 173; that span reads MGR. ADP is bound by residues 187–189 and 215–217; these read GCE and KRH. Residues Glu-224, Arg-245, and 251–254 contribute to the substrate site; that span reads HVQR.

This sequence belongs to the phosphofructokinase type A (PFKA) family. ATP-dependent PFK group I subfamily. Prokaryotic clade 'B1' sub-subfamily. As to quaternary structure, homotetramer. It depends on Mg(2+) as a cofactor.

The protein resides in the cytoplasm. The enzyme catalyses beta-D-fructose 6-phosphate + ATP = beta-D-fructose 1,6-bisphosphate + ADP + H(+). It functions in the pathway carbohydrate degradation; glycolysis; D-glyceraldehyde 3-phosphate and glycerone phosphate from D-glucose: step 3/4. With respect to regulation, allosterically activated by ADP and other diphosphonucleosides, and allosterically inhibited by phosphoenolpyruvate. Functionally, catalyzes the phosphorylation of D-fructose 6-phosphate to fructose 1,6-bisphosphate by ATP, the first committing step of glycolysis. The protein is ATP-dependent 6-phosphofructokinase of Actinobacillus succinogenes (strain ATCC 55618 / DSM 22257 / CCUG 43843 / 130Z).